Here is a 493-residue protein sequence, read N- to C-terminus: MRFTFSNDLGTLFTIILAIGFIINLVLAFIIIFLERNRRTASSTWAWLFVLFVLPLIGFILYLFFGRTVSARKLNKNNGNVLTDFDGLLKQQIESFDKGNYGTDNKQVQKHHDLVRMLLMDQDGFLTENNKVDHFIDGNDLYDQVLKDIKNAKEYIHLEYYTFALDGLGKRILHALEEKLKQGLEVKILYDDVGSKNVKMANFDHFKSLGGEVEAFFASKLPLLNFRMNNRNHRKIIVIDGQLGYVGGFNIGDEYLGLGKLGYWRDTHLRIQGDAVDALQLRFILDWNSQAHRPQFEYDVKYFPKKNGPLGNSPIQIAASGPASDWHQIEYGYTKMIMSAKKSVYLQSPYFIPDNSYINAIKIAAKSGVDVHLMIPCKPDHPLVYWATFSNASDLLSSGVKIYTYENGFIHSKMCLIDDEIVSVGTANMDFRSFELNFEVNAFVYDENLAKDLRVAYEHDITKSKQLTKESYANRPLSVKFKESLAKLVSPIL.

The next 2 helical transmembrane spans lie at 13–33 (FTII…IIIF) and 45–65 (WAWL…YLFF). PLD phosphodiesterase domains follow at residues 228 to 255 (MNNR…GDEY) and 406 to 433 (ENGF…DFRS). Residues His233, Lys235, Asp240, His411, Lys413, and Asp418 contribute to the active site.

Belongs to the phospholipase D family. Cardiolipin synthase subfamily.

The protein localises to the cell membrane. The catalysed reaction is 2 a 1,2-diacyl-sn-glycero-3-phospho-(1'-sn-glycerol) = a cardiolipin + glycerol. Catalyzes the reversible phosphatidyl group transfer from one phosphatidylglycerol molecule to another to form cardiolipin (CL) (diphosphatidylglycerol) and glycerol. The protein is Cardiolipin synthase 1 (cls1) of Staphylococcus aureus (strain COL).